The primary structure comprises 423 residues: Galactosylceramide sulfotransferase (423 aa).

At 1–12 (MTLLPKKPCKSK) the chain is on the cytoplasmic side. Residues 13–35 (AKGLLLGALFTSFLLLLYSYVVP) form a helical; Signal-anchor for type II membrane protein membrane-spanning segment. Residues 36–423 (PLYPNMAFTT…WKFLRDFLRW (388 aa)) are Lumenal-facing. N-linked (GlcNAc...) asparagine glycosylation is found at asparagine 66 and asparagine 312.

Belongs to the galactose-3-O-sulfotransferase family. As to expression, expressed in brain, testis, kidney, stomach, small intestine, liver, and lung. Not detected in heart, skeletal muscle, and spleen.

The protein localises to the golgi apparatus membrane. It carries out the reaction a beta-D-galactosyl-(1&lt;-&gt;1')-N-acylsphing-4-enine + 3'-phosphoadenylyl sulfate = an N-acyl-1-beta-D-(3-O-sulfo)-galactosyl-sphing-4-enine + adenosine 3',5'-bisphosphate + H(+). The catalysed reaction is a 1-O-alkyl-2-acyl-3-O-(beta-D-galactosyl)-sn-glycerol + 3'-phosphoadenylyl sulfate = a 1-O-alkyl-2-acyl-3-(beta-D-3-sulfogalactosyl)-sn-glycerol + adenosine 3',5'-bisphosphate + H(+). The enzyme catalyses a beta-D-Gal-(1&lt;-&gt;1')-ceramide + 3'-phosphoadenylyl sulfate = 1-(3-O-sulfo-beta-D-galactosyl)-ceramide + adenosine 3',5'-bisphosphate + H(+). It catalyses the reaction a 1,2-diacyl-3-O-(beta-D-galactosyl)-sn-glycerol + 3'-phosphoadenylyl sulfate = 1,2-diacyl-3-(3-O-sulfo-beta-D-galactosyl)-sn-glycerol + adenosine 3',5'-bisphosphate + H(+). It carries out the reaction a beta-D-Gal-(1-&gt;4)-beta-D-Glc-(1&lt;-&gt;1)-Cer(d18:1(4E)) + 3'-phosphoadenylyl sulfate = beta-D-3-sulfogalactosyl-(1-&gt;4)-beta-D-glucosyl-(1&lt;-&gt;1')-N-acylsphing-4-enine + adenosine 3',5'-bisphosphate + H(+). It functions in the pathway lipid metabolism; sphingolipid metabolism. In terms of biological role, catalyzes the transfer of a sulfate group to position 3 of non-reducing beta-galactosyl residues in glycerolipids and sphingolipids, therefore participates in the biosynthesis of sulfoglycolipids. Catalyzes the synthesis of galactosylceramide sulfate (sulfatide), a major lipid component of the myelin sheath and of monogalactosylalkylacylglycerol sulfate (seminolipid), present in spermatocytes. Seems to prefer beta-glycosides at the non-reducing termini of sugar chains attached to a lipid moiety. Also acts on lactosylceramide, galactosyl 1-alkyl-2-sn-glycerol and galactosyl diacylglycerol (in vitro). The sequence is that of Galactosylceramide sulfotransferase from Mus musculus (Mouse).